Consider the following 174-residue polypeptide: UPF0340 protein SAHV_2098 (174 aa).

The protein belongs to the UPF0340 family.

This is UPF0340 protein SAHV_2098 from Staphylococcus aureus (strain Mu3 / ATCC 700698).